Reading from the N-terminus, the 510-residue chain is NAD(P)H-quinone oxidoreductase subunit 2 A, chloroplastic (510 aa).

13 helical membrane passes run 24 to 44 (LLLF…GLIL), 57 to 77 (IPWL…ALLF), 99 to 119 (IFQF…VEYI), 124 to 144 (MALT…MFLC), 149 to 169 (LITI…LSGY), 183 to 203 (YLLM…WLYG), 227 to 247 (PGIS…LSPA), 295 to 315 (WHLL…LIAI), 323 to 343 (MLAY…IVGD), 354 to 374 (YMLF…LFGL), 395 to 415 (ALSL…AGFF), 418 to 438 (IYLF…IGLL), and 484 to 504 (MIVC…IITI).

This sequence belongs to the complex I subunit 2 family. In terms of assembly, NDH is composed of at least 16 different subunits, 5 of which are encoded in the nucleus.

The protein localises to the plastid. It is found in the chloroplast thylakoid membrane. The catalysed reaction is a plastoquinone + NADH + (n+1) H(+)(in) = a plastoquinol + NAD(+) + n H(+)(out). It catalyses the reaction a plastoquinone + NADPH + (n+1) H(+)(in) = a plastoquinol + NADP(+) + n H(+)(out). Its function is as follows. NDH shuttles electrons from NAD(P)H:plastoquinone, via FMN and iron-sulfur (Fe-S) centers, to quinones in the photosynthetic chain and possibly in a chloroplast respiratory chain. The immediate electron acceptor for the enzyme in this species is believed to be plastoquinone. Couples the redox reaction to proton translocation, and thus conserves the redox energy in a proton gradient. The chain is NAD(P)H-quinone oxidoreductase subunit 2 A, chloroplastic from Spinacia oleracea (Spinach).